A 150-amino-acid polypeptide reads, in one-letter code: Large ribosomal subunit protein uL15 (150 aa).

Belongs to the universal ribosomal protein uL15 family. In terms of assembly, part of the 50S ribosomal subunit.

Binds to the 23S rRNA. The chain is Large ribosomal subunit protein uL15 from Rickettsia typhi (strain ATCC VR-144 / Wilmington).